Consider the following 493-residue polypeptide: MAVLGITVALLVWIATLLLVSIWKQIYRSWNLPPGPFPIPFFGNIFQLDLKDIPKSLTKLAKRFGPVFTLHLGQRRIVVLHGYKAVKEVLLNHKNEFSGRGDIPVFQEYKNKGIIFNNGPTWKDVRRFSLSILRDWGMGKQGNEARIQREAHFLVEELKKTKGQPFDPTFLIGCAPCNVIADILFNKRFDYDDKKCLELMSLFNENFYLLSTPWIQAYNYFSDYLQYLPGSHRKVMKNVSEIRQYTLGKAKEHLKSLDINCPRDVTDCLLIEMEKEKHSQEPMYTMENISVTLADLFFAGTETTSTTLRYGLLILMKYPEIEEKLHEEIDRVIGPSRAPAVRDRMNMPYMDAVVHEIQRFINLVPSNLPHEATRDTVFRGYVIPKGTVVIPTLDSLLFDNYEFPDPETFKPEHFLNENGKFKYSDYFKAFSAGKRVCVGEGLARMELFLLLSAILQHFNLKSLVDPKDIDLSPVTIGFGSIPREFKLCVIPRS.

298-303 is a binding site for substrate; it reads FAGTET. A heme-binding site is contributed by Cys437.

Belongs to the cytochrome P450 family. In terms of assembly, interacts with chaperones HSP70 and HSP90; this interaction is required for initial targeting to mitochondria. Requires heme as cofactor. In terms of tissue distribution, highest level in the liver and to a lesser extent in the kidney, with a higher level in the male kidney than in the female.

It localises to the endoplasmic reticulum membrane. The protein localises to the microsome membrane. It is found in the mitochondrion inner membrane. The enzyme catalyses an organic molecule + reduced [NADPH--hemoprotein reductase] + O2 = an alcohol + oxidized [NADPH--hemoprotein reductase] + H2O + H(+). It carries out the reaction (5Z,8Z,11Z)-eicosatrienoate + reduced [NADPH--hemoprotein reductase] + O2 = 19-hydroxy-(5Z,8Z,11Z)-eicosatrienoate + oxidized [NADPH--hemoprotein reductase] + H2O + H(+). The catalysed reaction is (5Z,8Z,11Z,14Z,17Z)-eicosapentaenoate + reduced [NADPH--hemoprotein reductase] + O2 = 19-hydroxy-(5Z,8Z,11Z,14Z,17Z)-eicosapentaenoate + oxidized [NADPH--hemoprotein reductase] + H2O + H(+). It catalyses the reaction (4Z,7Z,10Z,13Z,16Z,19Z)-docosahexaenoate + reduced [NADPH--hemoprotein reductase] + O2 = 21-hydroxy-(4Z,7Z,10Z,13Z,16Z,19Z)-docosahexaenoate + oxidized [NADPH--hemoprotein reductase] + H2O + H(+). The enzyme catalyses dodecanoate + reduced [NADPH--hemoprotein reductase] + O2 = 11-hydroxydodecanoate + oxidized [NADPH--hemoprotein reductase] + H2O + H(+). It carries out the reaction tetradecanoate + reduced [NADPH--hemoprotein reductase] + O2 = 13-hydroxytetradecanoate + oxidized [NADPH--hemoprotein reductase] + H2O + H(+). The catalysed reaction is 4-nitrophenol + NADPH + O2 + H(+) = 4-nitrocatechol + NADP(+) + H2O. The protein operates within lipid metabolism; fatty acid metabolism. The omega-1 hydroxylase activity is stimulated by cytochrome b5. Functionally, a cytochrome P450 monooxygenase involved in the metabolism of fatty acids. Mechanistically, uses molecular oxygen inserting one oxygen atom into a substrate, and reducing the second into a water molecule, with two electrons provided by NADPH via cytochrome P450 reductase (NADPH--hemoprotein reductase). Catalyzes the hydroxylation of carbon-hydrogen bonds. Hydroxylates fatty acids specifically at the omega-1 position displaying the highest catalytic activity for saturated fatty acids. May be involved in the oxidative metabolism of xenobiotics. This chain is Cytochrome P450 2E1 (Cyp2e1), found in Mus musculus (Mouse).